The following is a 985-amino-acid chain: Ras and Rab interactor 3 (985 aa).

The segment at methionine 1–glutamate 24 is disordered. The region spanning tryptophan 63–glutamine 158 is the SH2 domain. Disordered regions lie at residues serine 183 to proline 202, glutamine 251 to serine 293, and proline 315 to leucine 531. The span at glutamate 189–alanine 201 shows a compositional bias: basic and acidic residues. Pro residues-rich tracts occupy residues arginine 278–proline 288 and proline 315–proline 336. Residues aspartate 424–aspartate 442 are compositionally biased toward basic and acidic residues. Residues phenylalanine 587–serine 732 are interaction with RAB5B. The 144-residue stretch at histidine 703–threonine 846 folds into the VPS9 domain. Residues glutamine 877–leucine 963 form the Ras-associating domain.

It belongs to the RIN (Ras interaction/interference) family. In terms of assembly, interacts with CD2AP, RAB5B, RAB31 and BIN1. As to expression, widely expressed.

The protein resides in the cytoplasm. It localises to the cytoplasmic vesicle. Its subcellular location is the early endosome. Ras effector protein that functions as a guanine nucleotide exchange (GEF) for RAB5B and RAB31, by exchanging bound GDP for free GTP. Required for normal RAB31 function. The protein is Ras and Rab interactor 3 (RIN3) of Homo sapiens (Human).